Here is a 554-residue protein sequence, read N- to C-terminus: Hydroxylamine reductase (554 aa).

Positions 3, 6, 18, and 25 each coordinate [2Fe-2S] cluster. Residues His252, Glu276, Cys320, Cys408, Cys436, Cys461, Glu495, and Lys497 each coordinate hybrid [4Fe-2O-2S] cluster. Cysteine persulfide is present on Cys408.

The protein belongs to the HCP family. [2Fe-2S] cluster serves as cofactor. Requires hybrid [4Fe-2O-2S] cluster as cofactor.

The protein resides in the cytoplasm. It catalyses the reaction A + NH4(+) + H2O = hydroxylamine + AH2 + H(+). In terms of biological role, catalyzes the reduction of hydroxylamine to form NH(3) and H(2)O. In Shewanella baltica (strain OS155 / ATCC BAA-1091), this protein is Hydroxylamine reductase.